The sequence spans 163 residues: Probable ribosome biogenesis protein RLP24 (163 aa).

This sequence belongs to the eukaryotic ribosomal protein eL24 family. In terms of assembly, associated with nucleolar and cytoplasmic pre-60S particles. At the end of biogenesis it dissociates from cytoplasmic pre-60S particles and is likely to be exchanged for its ribosomal homolog, RPL24.

Its subcellular location is the nucleus. It is found in the nucleolus. Involved in the biogenesis of the 60S ribosomal subunit. Ensures the docking of GTPBP4/NOG1 to pre-60S particles. This is Probable ribosome biogenesis protein RLP24 (RSL24D1) from Homo sapiens (Human).